Here is a 394-residue protein sequence, read N- to C-terminus: Elongation factor Tu 2 (394 aa).

The tr-type G domain maps to 10–204 (KPHVNVGTIG…YLDTYIPEPE (195 aa)). The interval 19–26 (GHVDHGKT) is G1. 19–26 (GHVDHGKT) lines the GTP pocket. A Mg(2+)-binding site is contributed by Thr-26. Residues 60 to 64 (GITIN) form a G2 region. A G3 region spans residues 81–84 (DCPG). GTP contacts are provided by residues 81 to 85 (DCPGH) and 136 to 139 (NKCD). The interval 136 to 139 (NKCD) is G4. Positions 174-176 (SAL) are G5.

The protein belongs to the TRAFAC class translation factor GTPase superfamily. Classic translation factor GTPase family. EF-Tu/EF-1A subfamily. In terms of assembly, monomer.

It localises to the cytoplasm. The enzyme catalyses GTP + H2O = GDP + phosphate + H(+). GTP hydrolase that promotes the GTP-dependent binding of aminoacyl-tRNA to the A-site of ribosomes during protein biosynthesis. The sequence is that of Elongation factor Tu 2 from Yersinia enterocolitica serotype O:8 / biotype 1B (strain NCTC 13174 / 8081).